Here is a 218-residue protein sequence, read N- to C-terminus: MGDRENVSYGSRPILAQKMNLLLRGFLLFLIGVFLALVLNLLQVQRNVTLFPPDVLSSLFSSAWWVPLCCGTAAAAIGLLYPCIDRHLGEPHKFKREWSSVMRCVAVFVGINHASAKVDFANNMQLSLTLAALSIGLWWTFDRSRSGLGLGIGISFFATLVSQLLVYNGVYEYTAPDFLYVRSWLPCIFFAGGITMGNIGRQLEMYERKALVEKSHRD.

At 1-21 (MGDRENVSYGSRPILAQKMNL) the chain is on the cytoplasmic side. Residues 22–44 (LLRGFLLFLIGVFLALVLNLLQV) traverse the membrane as a helical segment. Residues 45–63 (QRNVTLFPPDVLSSLFSSA) are Lumenal-facing. Residues 64-81 (WWVPLCCGTAAAAIGLLY) form a helical membrane-spanning segment. Residues 82–96 (PCIDRHLGEPHKFKR) lie on the Cytoplasmic side of the membrane. Residues 97 to 119 (EWSSVMRCVAVFVGINHASAKVD) form a helical membrane-spanning segment. The Lumenal segment spans residues 120-122 (FAN). A helical membrane pass occupies residues 123 to 141 (NMQLSLTLAALSIGLWWTF). Topologically, residues 142–146 (DRSRS) are cytoplasmic. The helical transmembrane segment at 147 to 168 (GLGLGIGISFFATLVSQLLVYN) threads the bilayer. Over 169–182 (GVYEYTAPDFLYVR) the chain is Lumenal. Residues 183-200 (SWLPCIFFAGGITMGNIG) traverse the membrane as a helical segment. The Cytoplasmic portion of the chain corresponds to 201–218 (RQLEMYERKALVEKSHRD). Residues 212-218 (VEKSHRD) carry the KxHxx motif.

The protein belongs to the INSIG family. Interacts with scap; interaction is direct and only takes place in the presence of sterols; it prevents interaction between scap and the coat protein complex II (COPII). Associates with the SCAP-SREBP complex; association is mediated via its interaction with scap and only takes place in the presence of sterols.

It localises to the endoplasmic reticulum membrane. Functionally, oxysterol-binding protein that mediates feedback control of cholesterol synthesis by controlling both endoplasmic reticulum to Golgi transport of scap and degradation of hmgcr. Acts as a negative regulator of cholesterol biosynthesis by mediating the retention of the SCAP-SREBP complex in the endoplasmic reticulum, thereby blocking the processing of sterol regulatory element-binding proteins (SREBPs). Binds oxysterol, including 22-hydroxycholesterol, 24-hydroxycholesterol, 25-hydroxycholesterol and 27-hydroxycholesterol, regulating interaction with scap and retention of the SCAP-SREBP complex in the endoplasmic reticulum. In presence of oxysterol, interacts with scap, retaining the SCAP-SREBP complex in the endoplasmic reticulum, thereby preventing scap from escorting SREBPs to the Golgi. Sterol deprivation reduce oxysterol-binding, disrupting the interaction between insig2 and scap, thereby promoting Golgi transport of the SCAP-SREBP complex, followed by processing and nuclear translocation of SREBPs. Also regulates cholesterol synthesis by regulating degradation of hmgcr. The sequence is that of Insulin-induced gene 2 protein from Xenopus laevis (African clawed frog).